The sequence spans 199 residues: 7-methyl-GTP pyrophosphatase (199 aa).

Aspartate 76 (proton acceptor) is an active-site residue.

The protein belongs to the Maf family. YceF subfamily. The cofactor is a divalent metal cation.

It localises to the cytoplasm. It carries out the reaction N(7)-methyl-GTP + H2O = N(7)-methyl-GMP + diphosphate + H(+). Nucleoside triphosphate pyrophosphatase that hydrolyzes 7-methyl-GTP (m(7)GTP). May have a dual role in cell division arrest and in preventing the incorporation of modified nucleotides into cellular nucleic acids. The polypeptide is 7-methyl-GTP pyrophosphatase (Nitrosococcus oceani (strain ATCC 19707 / BCRC 17464 / JCM 30415 / NCIMB 11848 / C-107)).